A 361-amino-acid polypeptide reads, in one-letter code: Nuclear pore complex protein NUP43 (361 aa).

Residues 51–73 form a disordered region; the sequence is IQSLDPNPRGNHNTNPLIESLSS. WD repeat units lie at residues 132-173, 177-215, and 225-265; these read FHVG…YRKV, NGLVAYRAVKWASPTEFVTGGYGFGLQLWDQRKSGEAVS, and KTSA…QPIV.

In terms of assembly, part of the nuclear pore complex (NPC). The NPC has an eight-fold symmetrical structure comprising a central transport channel and two rings, the cytoplasmic and nuclear rings, to which eight filaments are attached. The cytoplasmic filaments have loose ends, while the nuclear filaments are joined in a distal ring, forming a nuclear basket. NPCs are highly dynamic in configuration and composition, and can be devided in 3 subcomplexes, the NUP62 subcomplex, the NUP107-160 subcomplex and the NUP93 subcomplex, containing approximately 30 different nucleoporin proteins.

It is found in the nucleus envelope. It localises to the nucleus. The protein resides in the nuclear pore complex. The chain is Nuclear pore complex protein NUP43 from Arabidopsis thaliana (Mouse-ear cress).